A 465-amino-acid polypeptide reads, in one-letter code: Methionine aminopeptidase 2-2 (465 aa).

Over residues 1-13 the composition is skewed to basic and acidic residues; the sequence is MGSKTPNDHRRGP. The segment at 1-92 is disordered; that stretch reads MGSKTPNDHR…KKKTLLGGLQ (92 aa). Residues 44–55 are compositionally biased toward acidic residues; the sequence is GETEDGEDEDDD. Basic residues predominate over residues 71–86; sequence TKKKNKRKKNKKKKKT. Residue His-217 coordinates substrate. A divalent metal cation contacts are provided by Asp-238, Asp-249, and His-318. A substrate-binding site is contributed by His-326. 2 residues coordinate a divalent metal cation: Glu-351 and Glu-446.

It belongs to the peptidase M24A family. Methionine aminopeptidase eukaryotic type 2 subfamily. The cofactor is Co(2+). Zn(2+) serves as cofactor. It depends on Mn(2+) as a cofactor. Fe(2+) is required as a cofactor.

It is found in the cytoplasm. It catalyses the reaction Release of N-terminal amino acids, preferentially methionine, from peptides and arylamides.. Its function is as follows. Cotranslationally removes the N-terminal methionine from nascent proteins. The N-terminal methionine is often cleaved when the second residue in the primary sequence is small and uncharged (Met-Ala-, Cys, Gly, Pro, Ser, Thr, or Val). The protein is Methionine aminopeptidase 2-2 of Ajellomyces dermatitidis (strain ER-3 / ATCC MYA-2586) (Blastomyces dermatitidis).